The primary structure comprises 302 residues: UDP-N-acetylenolpyruvoylglucosamine reductase (302 aa).

Residues 27-192 enclose the FAD-binding PCMH-type domain; sequence KTGGPADYVA…VSVTFGLKPG (166 aa). The active site involves Arg171. Ser221 serves as the catalytic Proton donor. The active site involves Glu291.

This sequence belongs to the MurB family. FAD serves as cofactor.

Its subcellular location is the cytoplasm. The catalysed reaction is UDP-N-acetyl-alpha-D-muramate + NADP(+) = UDP-N-acetyl-3-O-(1-carboxyvinyl)-alpha-D-glucosamine + NADPH + H(+). It functions in the pathway cell wall biogenesis; peptidoglycan biosynthesis. Cell wall formation. The chain is UDP-N-acetylenolpyruvoylglucosamine reductase from Lactiplantibacillus plantarum (strain ATCC BAA-793 / NCIMB 8826 / WCFS1) (Lactobacillus plantarum).